Here is a 196-residue protein sequence, read N- to C-terminus: 3-isopropylmalate dehydratase small subunit (196 aa).

The protein belongs to the LeuD family. LeuD type 1 subfamily. Heterodimer of LeuC and LeuD.

The enzyme catalyses (2R,3S)-3-isopropylmalate = (2S)-2-isopropylmalate. It functions in the pathway amino-acid biosynthesis; L-leucine biosynthesis; L-leucine from 3-methyl-2-oxobutanoate: step 2/4. Functionally, catalyzes the isomerization between 2-isopropylmalate and 3-isopropylmalate, via the formation of 2-isopropylmaleate. The polypeptide is 3-isopropylmalate dehydratase small subunit (Corynebacterium diphtheriae (strain ATCC 700971 / NCTC 13129 / Biotype gravis)).